Consider the following 402-residue polypeptide: Dihydrolipoyllysine-residue acetyltransferase component of pyruvate dehydrogenase complex (402 aa).

A Lipoyl-binding domain is found at 2–77 (ANEFKFTDVG…HIGQVMAVID (76 aa)). Lysine 43 carries the N6-lipoyllysine modification. Disordered regions lie at residues 82-110 (AAAP…APVT) and 143-172 (PQPT…PSGE). Pro residues-rich tracts occupy residues 87 to 107 (APQP…PTPA) and 143 to 162 (PQPT…PTPA). The active site involves histidine 374.

It belongs to the 2-oxoacid dehydrogenase family. In terms of assembly, forms a 24-polypeptide structural core with octahedral symmetry. (R)-lipoate is required as a cofactor.

It catalyses the reaction N(6)-[(R)-dihydrolipoyl]-L-lysyl-[protein] + acetyl-CoA = N(6)-[(R)-S(8)-acetyldihydrolipoyl]-L-lysyl-[protein] + CoA. In terms of biological role, the pyruvate dehydrogenase complex catalyzes the overall conversion of pyruvate to acetyl-CoA and CO(2). It contains multiple copies of three enzymatic components: pyruvate dehydrogenase (E1), dihydrolipoamide acetyltransferase (E2) and lipoamide dehydrogenase (E3). The chain is Dihydrolipoyllysine-residue acetyltransferase component of pyruvate dehydrogenase complex (pdhC) from Mycoplasma pneumoniae (strain ATCC 29342 / M129 / Subtype 1) (Mycoplasmoides pneumoniae).